An 89-amino-acid polypeptide reads, in one-letter code: Phosphocarrier protein HPr (89 aa).

Residues 1–88 enclose the HPr domain; that stretch reads MLQRDTTIIN…ALIANRFGEG (88 aa). The active-site Pros-phosphohistidine intermediate is the histidine 15.

It belongs to the HPr family.

It localises to the cytoplasm. In terms of biological role, general (non sugar-specific) component of the phosphoenolpyruvate-dependent sugar phosphotransferase system (sugar PTS). This major carbohydrate active-transport system catalyzes the phosphorylation of incoming sugar substrates concomitantly with their translocation across the cell membrane. The phosphoryl group from phosphoenolpyruvate (PEP) is transferred to the phosphoryl carrier protein HPr by enzyme I. Phospho-HPr then transfers it to the PTS EIIA domain. The sequence is that of Phosphocarrier protein HPr (phbH) from Cupriavidus necator (strain ATCC 17699 / DSM 428 / KCTC 22496 / NCIMB 10442 / H16 / Stanier 337) (Ralstonia eutropha).